Consider the following 439-residue polypeptide: Methionine aminopeptidase 2-2 (439 aa).

The tract at residues 1-90 (MAAQTTEKLD…RVPVSNLFPN (90 aa)) is disordered. Acidic residues predominate over residues 28 to 41 (EAEEDSDDAQDEGA). Residues 56 to 72 (KKKKKKKPKKKSKKKGG) are compositionally biased toward basic residues. His196 provides a ligand contact to substrate. Asp216, Asp227, and His296 together coordinate a divalent metal cation. Residue His304 coordinates substrate. Residues Glu329 and Glu424 each coordinate a divalent metal cation.

This sequence belongs to the peptidase M24A family. Methionine aminopeptidase eukaryotic type 2 subfamily. Co(2+) is required as a cofactor. It depends on Zn(2+) as a cofactor. The cofactor is Mn(2+). Requires Fe(2+) as cofactor.

It localises to the cytoplasm. It carries out the reaction Release of N-terminal amino acids, preferentially methionine, from peptides and arylamides.. In terms of biological role, cotranslationally removes the N-terminal methionine from nascent proteins. The N-terminal methionine is often cleaved when the second residue in the primary sequence is small and uncharged (Met-Ala-, Cys, Gly, Pro, Ser, Thr, or Val). The polypeptide is Methionine aminopeptidase 2-2 (Penicillium rubens (strain ATCC 28089 / DSM 1075 / NRRL 1951 / Wisconsin 54-1255) (Penicillium chrysogenum)).